A 159-amino-acid chain; its full sequence is Riboflavin kinase (159 aa).

38 to 43 (GLGEGR) lines the CDP pocket. Positions 67 and 69 each coordinate Mg(2+). FMN contacts are provided by threonine 126 and glutamate 134. 139–142 (HKLR) contributes to the CDP binding site.

The protein belongs to the archaeal riboflavin kinase family. Mg(2+) is required as a cofactor.

It carries out the reaction riboflavin + CTP = CDP + FMN + H(+). The protein operates within cofactor biosynthesis; FMN biosynthesis; FMN from riboflavin (CTP route): step 1/1. Its function is as follows. Catalyzes the CTP-dependent phosphorylation of riboflavin (vitamin B2) to form flavin mononucleotide (FMN). The chain is Riboflavin kinase from Sulfolobus acidocaldarius (strain ATCC 33909 / DSM 639 / JCM 8929 / NBRC 15157 / NCIMB 11770).